The sequence spans 343 residues: C-X-C chemokine receptor type 6 (343 aa).

Residues 1–33 (MAEYDHYEDDEFFNSFNDSSQKEHQDFLQFSKV) lie on the Extracellular side of the membrane. N-linked (GlcNAc...) asparagine glycosylation occurs at Asn-17. Residues 34 to 60 (FLPCMYLVVFVCGLVGNSLVLVISIFY) form a helical membrane-spanning segment. At 61-69 (HKLQSLTDV) the chain is on the cytoplasmic side. Residues 70 to 90 (FLVNLPLADLVFVCTLPFWAY) traverse the membrane as a helical segment. At 91 to 104 (AGIHEWIFGQVMCK) the chain is on the extracellular side. A disulfide bridge connects residues Cys-103 and Cys-181. A helical membrane pass occupies residues 105–126 (TLLGVYTINFYTSMLILTCITV). Over 127 to 144 (DRFIVVVKATKAYNQQAK) the chain is Cytoplasmic. The chain crosses the membrane as a helical span at residues 145–165 (RMTWGKVICLLIWVISLLVSL). The Extracellular portion of the chain corresponds to 166–188 (PQIIYGNVFNLDKLICRYHDEEI). The chain crosses the membrane as a helical span at residues 189-216 (STVVLATQMTLGFFLPLLTMIVCYSVII). The Cytoplasmic portion of the chain corresponds to 217 to 232 (KTLLHAGGFQKHRSLK). The chain crosses the membrane as a helical span at residues 233-260 (IIFLVMAVFLLTQTPFNLVKLIRSTHWE). Residues 261-276 (YYAMTSFHYTIIVTEA) lie on the Extracellular side of the membrane. Residues 277–294 (IAYLRACLNPVLYAFVSL) traverse the membrane as a helical segment. The Cytoplasmic portion of the chain corresponds to 295-343 (KFRKNFWKLVKDIGCLPYLGVSHQWKSSEDNSKTFSASHNVEATSMFQL).

It belongs to the G-protein coupled receptor 1 family.

The protein resides in the cell membrane. In terms of biological role, receptor for the C-X-C chemokine CXCL16. Used as a coreceptor by SIVs and by strains of HIV-2 and m-tropic HIV-1. The sequence is that of C-X-C chemokine receptor type 6 (CXCR6) from Cercocebus atys (Sooty mangabey).